A 319-amino-acid chain; its full sequence is 33 kDa chaperonin (319 aa).

Intrachain disulfides connect Cys-239–Cys-241 and Cys-272–Cys-275. A disordered region spans residues 300–319 (EVSEEMKKAEEKEKEEKNKK).

This sequence belongs to the HSP33 family. In terms of processing, under oxidizing conditions two disulfide bonds are formed involving the reactive cysteines. Under reducing conditions zinc is bound to the reactive cysteines and the protein is inactive.

The protein localises to the cytoplasm. In terms of biological role, redox regulated molecular chaperone. Protects both thermally unfolding and oxidatively damaged proteins from irreversible aggregation. Plays an important role in the bacterial defense system toward oxidative stress. The chain is 33 kDa chaperonin from Clostridium perfringens (strain ATCC 13124 / DSM 756 / JCM 1290 / NCIMB 6125 / NCTC 8237 / Type A).